A 477-amino-acid polypeptide reads, in one-letter code: UDP-sulfoquinovose synthase, chloroplastic (477 aa).

Positions 1–21 are disordered; that stretch reads MAHLLSASCPSVISLSSSSSK. The transit peptide at 1–86 directs the protein to the chloroplast; it reads MAHLLSASCP…TNNSSSKPKR (86 aa). NAD(+)-binding positions include 95-96, 115-119, 158-159, arginine 184, and asparagine 202; these read YC, DNLVR, and DI. Arginine 184 lines the substrate pocket. Threonine 228 and tyrosine 265 together coordinate substrate. Residue threonine 228 is part of the active site. Tyrosine 265 and lysine 269 together coordinate NAD(+). Catalysis depends on tyrosine 265, which acts as the Proton acceptor. Lysine 269 is an active-site residue. Glutamine 292 contacts substrate. Residue valine 295 participates in NAD(+) binding. Residues 322 to 325, 337 to 339, and 410 to 412 each bind substrate; these read ALNR, TVY, and RVE.

This sequence belongs to the NAD(P)-dependent epimerase/dehydratase family. In terms of assembly, homodimer. It depends on NAD(+) as a cofactor.

It localises to the plastid. The protein resides in the chloroplast. It catalyses the reaction sulfite + UDP-alpha-D-glucose + H(+) = UDP-alpha-D-6-sulfoquinovose + H2O. Concentrations above 100 uM sulfite inhibit the reaction. In terms of biological role, involved in the biosynthesis of sulfolipids found in thylakoid membranes. Converts UDP-glucose and sulfite to the sulfolipid head group precursor UDP-sulfoquinovose. The sequence is that of UDP-sulfoquinovose synthase, chloroplastic (SQD1) from Arabidopsis thaliana (Mouse-ear cress).